The sequence spans 379 residues: Mannitol-1-phosphate 5-dehydrogenase (379 aa).

3–14 (ALHFGAGNIGRG) serves as a coordination point for NAD(+).

The protein belongs to the mannitol dehydrogenase family.

The catalysed reaction is D-mannitol 1-phosphate + NAD(+) = beta-D-fructose 6-phosphate + NADH + H(+). This is Mannitol-1-phosphate 5-dehydrogenase from Actinobacillus pleuropneumoniae serotype 5b (strain L20).